The chain runs to 132 residues: Agouti-signaling protein (132 aa).

A signal peptide spans 1–22 (MDVTRLLLATLLVFLCFFTAYS). An N-linked (GlcNAc...) asparagine glycan is attached at Asn-39. Residues 61–87 (QISRKEAEKKRSSKKEASMKKVARPRT) form a disordered region. Residues 63-79 (SRKEAEKKRSSKKEASM) show a composition bias toward basic and acidic residues. 5 disulfides stabilise this stretch: Cys-93-Cys-108, Cys-100-Cys-114, Cys-107-Cys-125, Cys-111-Cys-132, and Cys-116-Cys-123. One can recognise an Agouti domain in the interval 93 to 132 (CVTTRDSCKPPAPACCDPCASCQCRFFRSACSCRVLSLNC).

Its subcellular location is the secreted. In terms of biological role, involved in the regulation of melanogenesis. The binding of ASP to MC1R precludes alpha-MSH initiated signaling and thus blocks production of cAMP, leading to a down-regulation of eumelanogenesis (brown/black pigment) and thus increasing synthesis of pheomelanin (yellow/red pigment). This Macaca silenus (Lion-tailed macaque) protein is Agouti-signaling protein (ASIP).